The following is a 198-amino-acid chain: uncharacterized protein (198 aa).

A disordered region spans residues 51–74; that stretch reads EEPDNGDDRGSRRTTGQGRKWAAH.

This is an uncharacterized protein from Homo sapiens (Human).